The following is a 404-amino-acid chain: Voltage-gated potassium channel subunit beta-3 (404 aa).

Residues 1 to 14 are compositionally biased toward polar residues; that stretch reads MQVSIACTEQNLRS. Residues 1–77 form a disordered region; it reads MQVSIACTEQ…LRESTGRGTG (77 aa). The segment covering 28–50 has biased composition (gly residues); the sequence is PGGGNGGPAGGGHGNPPGGGGSG. Thr97, Trp98, Gln104, and Asp126 together coordinate NADP(+). The active-site Proton donor/acceptor is Tyr131. Positions 199, 229, 230, 255, 284, 286, 287, 288, 289, 295, 305, 364, 366, 370, and 373 each coordinate NADP(+).

This sequence belongs to the shaker potassium channel beta subunit family. As to quaternary structure, forms heteromultimeric complex with alpha subunits. Interacts with KCNA5 and KCNB2. In terms of tissue distribution, brain specific. Most prominent expression in cerebellum. Weaker signals detected in cortex, occipital lobe, frontal lobe and temporal lobe. Not detected in spinal cord, heart, lung, liver, kidney, pancreas, placenta and skeletal muscle.

It is found in the cytoplasm. Functionally, regulatory subunit of the voltage-gated potassium (Kv) channels composed of pore-forming and potassium-conducting alpha subunits and of regulatory beta subunit. The beta-3/KCNAB3 subunit may mediate closure of potassium channels. Increases inactivation of Kv1.5/KCNA5 alpha subunit-containing channels. May display nicotinamide adenine dinucleotide phosphate (NADPH)-dependent aldoketoreductase activity. The binding of oxidized and reduced NADP(H) cofactors may be required for the regulation of potassium channel activity. This is Voltage-gated potassium channel subunit beta-3 from Homo sapiens (Human).